The primary structure comprises 147 residues: UPF0306 protein YhbP (147 aa).

This sequence belongs to the UPF0306 family.

This chain is UPF0306 protein YhbP, found in Escherichia coli O157:H7.